Consider the following 561-residue polypeptide: Corneodesmosin (561 aa).

A signal peptide spans 1-32; sequence MGSSRAPRMGSVGGHGLMALLMAGLILPGILA. 3 disordered regions span residues 41 to 275, 415 to 466, and 536 to 561; these read PCKD…HTVS, GSVS…SSSL, and PLGP…LEKS. The segment covering 61–99 has biased composition (low complexity); sequence GSNSISSQGGSSSFSSQGGSSSFSSHGGSSSSQGSSSGS. Residues 116–127 show a composition bias toward gly residues; sequence GSGGSRPGGSGS. Low complexity-rich tracts occupy residues 128–207 and 224–248; these read QSGS…SSGS and TSGM…PCSS. Over residues 415–430 the composition is skewed to polar residues; sequence GSVSSKGPCSGTRIQI. Low complexity predominate over residues 431–466; that stretch reads TSSSSSTSYHPCSGGPSQGPCSSPGTGSISGGSSSL.

Its subcellular location is the secreted. Important for the epidermal barrier integrity. The polypeptide is Corneodesmosin (Cdsn) (Mus musculus (Mouse)).